The primary structure comprises 430 residues: Endochitinase 46 (430 aa).

An N-terminal signal peptide occupies residues 1-22 (MLSFLGKSVALLAALQATLSSA). Residues 23–35 (SPLATEERSIEKR) constitute a propeptide that is removed on maturation. The region spanning 39–408 (YANSVYFTNW…GTSHRALGGL (370 aa)) is the GH18 domain. Chitin contacts are provided by residues 103–104 (GT) and 130–133 (GGWT). Catalysis depends on glutamate 172, which acts as the Proton donor. Tyrosine 173 provides a ligand contact to chitin. A glycan (N-linked (GlcNAc...) asparagine) is linked at asparagine 219. Chitin is bound by residues 238–241 (MAYD) and tryptophan 385.

The protein belongs to the glycosyl hydrolase 18 family. Chitinase class V subfamily.

The protein localises to the secreted. The catalysed reaction is Random endo-hydrolysis of N-acetyl-beta-D-glucosaminide (1-&gt;4)-beta-linkages in chitin and chitodextrins.. Its function is as follows. Secreted chitinase involved in the degradation of chitin, a component of the cell walls of fungi and exoskeletal elements of some animals (including worms and arthropods). Plays a morphogenetic role during apical growth, cell division and differentiation (cell wall morphogenesis). Also acts as an antifungal agent. Involved in the degradation and further assimilation of phytopathogenic fungi, namely mycoparasitism, the major mechanism accounting for the antagonistic activity against phytopathogenic fungi displayed by Trichoderma. The protein is Endochitinase 46 (chit46) of Trichoderma harzianum (Hypocrea lixii).